We begin with the raw amino-acid sequence, 510 residues long: GMP synthase [glutamine-hydrolyzing] (510 aa).

One can recognise a Glutamine amidotransferase type-1 domain in the interval 3–194 (QILILDFGSQ…ARVICGYKEK (192 aa)). Cysteine 80 acts as the Nucleophile in catalysis. Catalysis depends on residues histidine 168 and glutamate 170. One can recognise a GMPS ATP-PPase domain in the interval 195–385 (WTPASIMTAS…LGLGSEIVDI (191 aa)). ATP is bound at residue 222–228 (SGGVDSS).

As to quaternary structure, homodimer.

It carries out the reaction XMP + L-glutamine + ATP + H2O = GMP + L-glutamate + AMP + diphosphate + 2 H(+). The protein operates within purine metabolism; GMP biosynthesis; GMP from XMP (L-Gln route): step 1/1. Functionally, catalyzes the synthesis of GMP from XMP. The chain is GMP synthase [glutamine-hydrolyzing] from Elusimicrobium minutum (strain Pei191).